We begin with the raw amino-acid sequence, 244 residues long: Ureidoacrylate amidohydrolase RutB (244 aa).

The active-site Proton acceptor is Asp-38. Lys-147 is a catalytic residue. The active-site Nucleophile is Cys-180.

Belongs to the isochorismatase family. RutB subfamily.

It carries out the reaction (Z)-3-ureidoacrylate + H2O + H(+) = (Z)-3-aminoacrylate + NH4(+) + CO2. The enzyme catalyses (Z)-3-ureidoacrylate + H2O = (Z)-3-aminoacrylate + carbamate + H(+). It catalyses the reaction (Z)-2-methylureidoacrylate + H2O + H(+) = (Z)-2-methylaminoacrylate + NH4(+) + CO2. Functionally, hydrolyzes ureidoacrylate to form aminoacrylate and carbamate. The carbamate hydrolyzes spontaneously, thereby releasing one of the nitrogen atoms of the pyrimidine ring as ammonia and one of its carbon atoms as CO2. The polypeptide is Ureidoacrylate amidohydrolase RutB (Escherichia coli O55:H7 (strain CB9615 / EPEC)).